The following is a 540-amino-acid chain: CBL-interacting protein kinase 12 (540 aa).

The tract at residues 1–23 is disordered; that stretch reads MLMATVSPARREPTPQAVRASPM. The Protein kinase domain maps to 46–300; it reads YELGRVLGQG…VPEIIESDWF (255 aa). Residues 52–60 and K75 contribute to the ATP site; that span reads LGQGSFAKV. D168 (proton acceptor) is an active-site residue. An activation loop region spans residues 186–215; it reads DFGLAAGPDQFDPDGLLHTFCGTPAYVAPE. Residues 333 to 348 show a composition bias toward pro residues; it reads PPPLGLAPPVPPPPQG. Residues 333-380 are disordered; it reads PPPLGLAPPVPPPPQGDDPDGSGSESDSSVVSCPATLSTGESQRVRGS. A compositionally biased stretch (low complexity) spans 353–364; that stretch reads GSGSESDSSVVS. One can recognise an NAF domain in the interval 370-406; it reads STGESQRVRGSLPRPASLNAFDIISFSKGFNLSGLFE. The tract at residues 409–438 is PPI; the sequence is GNEIRFVSGEPMSDIVKKLEEIAKVKSFTV.

It belongs to the protein kinase superfamily. CAMK Ser/Thr protein kinase family. SNF1 subfamily. Mg(2+) is required as a cofactor. In terms of processing, autophosphorylated. As to expression, expressed at low levels in leaf blades.

The enzyme catalyses L-seryl-[protein] + ATP = O-phospho-L-seryl-[protein] + ADP + H(+). It catalyses the reaction L-threonyl-[protein] + ATP = O-phospho-L-threonyl-[protein] + ADP + H(+). Involved in drought stress tolerance. CIPK serine-threonine protein kinases interact with CBL proteins. Binding of a CBL protein to the regulatory NAF domain of CIPK protein lead to the activation of the kinase in a calcium-dependent manner. The protein is CBL-interacting protein kinase 12 (CIPK12) of Oryza sativa subsp. japonica (Rice).